The primary structure comprises 302 residues: Small ribosomal subunit biogenesis GTPase RsgA (302 aa).

The region spanning 69-229 (KNLLIRPKVA…VGDTPGFSKV (161 aa)) is the CP-type G domain. GTP is bound by residues 118–121 (NKID) and 172–180 (GPSGVGKSS). Positions 252, 257, 259, and 265 each coordinate Zn(2+).

The protein belongs to the TRAFAC class YlqF/YawG GTPase family. RsgA subfamily. Monomer. Associates with 30S ribosomal subunit, binds 16S rRNA. The cofactor is Zn(2+).

It is found in the cytoplasm. In terms of biological role, one of several proteins that assist in the late maturation steps of the functional core of the 30S ribosomal subunit. Helps release RbfA from mature subunits. May play a role in the assembly of ribosomal proteins into the subunit. Circularly permuted GTPase that catalyzes slow GTP hydrolysis, GTPase activity is stimulated by the 30S ribosomal subunit. This Aquifex aeolicus (strain VF5) protein is Small ribosomal subunit biogenesis GTPase RsgA.